We begin with the raw amino-acid sequence, 151 residues long: Putative pre-16S rRNA nuclease (151 aa).

This sequence belongs to the YqgF nuclease family.

The protein resides in the cytoplasm. Could be a nuclease involved in processing of the 5'-end of pre-16S rRNA. In Chlamydia pneumoniae (Chlamydophila pneumoniae), this protein is Putative pre-16S rRNA nuclease.